We begin with the raw amino-acid sequence, 42 residues long: Delta-hexatoxin-Hv1a (42 aa).

4 disulfide bridges follow: C1–C15, C8–C20, C14–C31, and C16–C42.

The protein belongs to the neurotoxin 06 (delta-actx) family. Expressed by the venom gland.

It localises to the secreted. Functionally, inhibits tetrodotoxin-sensitive voltage-gated sodium channels (Nav) by binding to site 3. Slows the inactivation, and causes a prolongation of action potential duration resulting in repetitive firing in autonomic and motor nerve fibers. Does not depolarize the resting potential. Does not affect tetrodotoxin-resistant sodium channels. This lethal neurotoxin is active on both insect and mammalian voltage-gated sodium channels. Pan-neuronal expression in Drosophila is lethal but flies engineered to express the toxin only in pacemaker neurons have profound defects in circadian rhythm but a normal lifespan. The polypeptide is Delta-hexatoxin-Hv1a (Hadronyche versuta (Blue mountains funnel-web spider)).